The primary structure comprises 153 residues: NAD(P)H-quinone oxidoreductase subunit N (153 aa).

This sequence belongs to the complex I NdhN subunit family. In terms of assembly, NDH-1 can be composed of about 15 different subunits; different subcomplexes with different compositions have been identified which probably have different functions.

The protein localises to the cellular thylakoid membrane. It carries out the reaction a plastoquinone + NADH + (n+1) H(+)(in) = a plastoquinol + NAD(+) + n H(+)(out). It catalyses the reaction a plastoquinone + NADPH + (n+1) H(+)(in) = a plastoquinol + NADP(+) + n H(+)(out). Its function is as follows. NDH-1 shuttles electrons from an unknown electron donor, via FMN and iron-sulfur (Fe-S) centers, to quinones in the respiratory and/or the photosynthetic chain. The immediate electron acceptor for the enzyme in this species is believed to be plastoquinone. Couples the redox reaction to proton translocation, and thus conserves the redox energy in a proton gradient. Cyanobacterial NDH-1 also plays a role in inorganic carbon-concentration. This chain is NAD(P)H-quinone oxidoreductase subunit N, found in Synechococcus sp. (strain WH7803).